The following is a 246-amino-acid chain: Pyridoxine 5'-phosphate synthase (246 aa).

Position 12 (Asn-12) interacts with 3-amino-2-oxopropyl phosphate. A 1-deoxy-D-xylulose 5-phosphate-binding site is contributed by 14-15; that stretch reads DH. A 3-amino-2-oxopropyl phosphate-binding site is contributed by Arg-23. Residue His-48 is the Proton acceptor of the active site. Positions 50 and 55 each coordinate 1-deoxy-D-xylulose 5-phosphate. The active-site Proton acceptor is the Glu-75. Thr-105 is a 1-deoxy-D-xylulose 5-phosphate binding site. The active-site Proton donor is His-196. Residues Gly-197 and 218-219 contribute to the 3-amino-2-oxopropyl phosphate site; that span reads GH.

This sequence belongs to the PNP synthase family. In terms of assembly, homooctamer; tetramer of dimers.

Its subcellular location is the cytoplasm. The catalysed reaction is 3-amino-2-oxopropyl phosphate + 1-deoxy-D-xylulose 5-phosphate = pyridoxine 5'-phosphate + phosphate + 2 H2O + H(+). Its pathway is cofactor biosynthesis; pyridoxine 5'-phosphate biosynthesis; pyridoxine 5'-phosphate from D-erythrose 4-phosphate: step 5/5. Its function is as follows. Catalyzes the complicated ring closure reaction between the two acyclic compounds 1-deoxy-D-xylulose-5-phosphate (DXP) and 3-amino-2-oxopropyl phosphate (1-amino-acetone-3-phosphate or AAP) to form pyridoxine 5'-phosphate (PNP) and inorganic phosphate. This Pseudomonas putida (strain ATCC 47054 / DSM 6125 / CFBP 8728 / NCIMB 11950 / KT2440) protein is Pyridoxine 5'-phosphate synthase.